A 176-amino-acid chain; its full sequence is ATP-dependent protease subunit HslV (176 aa).

Residue T2 is part of the active site. Na(+) is bound by residues G157, C160, and T163.

The protein belongs to the peptidase T1B family. HslV subfamily. In terms of assembly, a double ring-shaped homohexamer of HslV is capped on each side by a ring-shaped HslU homohexamer. The assembly of the HslU/HslV complex is dependent on binding of ATP.

The protein resides in the cytoplasm. It carries out the reaction ATP-dependent cleavage of peptide bonds with broad specificity.. With respect to regulation, allosterically activated by HslU binding. Its function is as follows. Protease subunit of a proteasome-like degradation complex believed to be a general protein degrading machinery. The sequence is that of ATP-dependent protease subunit HslV from Pseudomonas fluorescens (strain SBW25).